A 207-amino-acid chain; its full sequence is Claudin-11 (207 aa).

Residue Met-1 is a topological domain, cytoplasmic. Residues Val-2–Ile-22 form a helical membrane-spanning segment. Over Val-23 to Arg-82 the chain is Extracellular. Residues Ala-83–Leu-103 form a helical membrane-spanning segment. Residues Pro-104 to Leu-122 lie on the Cytoplasmic side of the membrane. Residues Ala-123 to Val-143 traverse the membrane as a helical segment. Topologically, residues Cys-144 to Ser-157 are extracellular. The helical transmembrane segment at Leu-158–Cys-178 threads the bilayer. The Cytoplasmic portion of the chain corresponds to Ala-179–Val-207. 4 positions are modified to phosphoserine: Ser-193, Ser-194, Ser-197, and Ser-198.

It belongs to the claudin family. Interacts with tetraspanin-3/TSPAN3. Interacts with OCLN.

Its subcellular location is the cell junction. The protein localises to the tight junction. It localises to the cell membrane. In terms of biological role, plays a major role in tight junction-specific obliteration of the intercellular space, through calcium-independent cell-adhesion activity. The sequence is that of Claudin-11 (CLDN11) from Bos taurus (Bovine).